Reading from the N-terminus, the 185-residue chain is Elongation factor P (185 aa).

The protein belongs to the elongation factor P family.

The protein resides in the cytoplasm. It participates in protein biosynthesis; polypeptide chain elongation. Functionally, involved in peptide bond synthesis. Stimulates efficient translation and peptide-bond synthesis on native or reconstituted 70S ribosomes in vitro. Probably functions indirectly by altering the affinity of the ribosome for aminoacyl-tRNA, thus increasing their reactivity as acceptors for peptidyl transferase. The protein is Elongation factor P of Nitratidesulfovibrio vulgaris (strain DSM 19637 / Miyazaki F) (Desulfovibrio vulgaris).